Here is a 365-residue protein sequence, read N- to C-terminus: Tetratricopeptide repeat protein 19, mitochondrial (365 aa).

A mitochondrion-targeting transit peptide spans 1-52; that stretch reads MFRLLRWRLGRTLLRAAGRRCGGCTARLLPERTGDAGTGAERLRTRGAPARG. 4 TPR repeats span residues 127–160, 220–260, 269–302, and 308–341; these read TYTYDLMANLAFIRGQLENAEQLFKATMSYLLGG, ANTY…CQEI, IVLMSDLATTLDAQGHFDDAYIYMQRASDLAREI, and HMVLSNLAAILIHRERYTQAKEIYQEALKRAELK.

This sequence belongs to the TTC19 family. Binds to the mature mitochondrial complex III dimer, after the incorporation of the Rieske protein UQCRFS1. Interacts with UQCRC1 and UQCRFS1. Interacts with ZFYVE26 and CHMP4B. In terms of processing, proteolytically cleaved by PARL.

The protein resides in the mitochondrion inner membrane. Required for the preservation of the structural and functional integrity of mitochondrial respiratory complex III by allowing the physiological turnover of the Rieske protein UQCRFS1. Involved in the clearance of UQCRFS1 N-terminal fragments, which are produced upon incorporation into the complex III and whose presence is detrimental for its catalytic activity. The polypeptide is Tetratricopeptide repeat protein 19, mitochondrial (Ttc19) (Mus musculus (Mouse)).